Consider the following 466-residue polypeptide: Ribosomal protein uS12 methylthiotransferase RimO (466 aa).

The MTTase N-terminal domain maps to 16–127 (PKVAFAHLGC…IVDVLQRVEA (112 aa)). Residues Cys-25, Cys-61, Cys-90, Cys-165, Cys-169, and Cys-172 each contribute to the [4Fe-4S] cluster site. The Radical SAM core domain occupies 151-380 (TTDQAVAYLK…MALQQPIAAE (230 aa)). In terms of domain architecture, TRAM spans 383–454 (QRWVGKTVDV…IYDLTGHIVG (72 aa)).

The protein belongs to the methylthiotransferase family. RimO subfamily. [4Fe-4S] cluster serves as cofactor.

The protein localises to the cytoplasm. The catalysed reaction is L-aspartate(89)-[ribosomal protein uS12]-hydrogen + (sulfur carrier)-SH + AH2 + 2 S-adenosyl-L-methionine = 3-methylsulfanyl-L-aspartate(89)-[ribosomal protein uS12]-hydrogen + (sulfur carrier)-H + 5'-deoxyadenosine + L-methionine + A + S-adenosyl-L-homocysteine + 2 H(+). Its function is as follows. Catalyzes the methylthiolation of an aspartic acid residue of ribosomal protein uS12. The chain is Ribosomal protein uS12 methylthiotransferase RimO from Synechococcus sp. (strain CC9902).